The following is a 513-amino-acid chain: Maturase K (513 aa).

Belongs to the intron maturase 2 family. MatK subfamily.

The protein localises to the plastid. It is found in the chloroplast. In terms of biological role, usually encoded in the trnK tRNA gene intron. Probably assists in splicing its own and other chloroplast group II introns. This Sporobolus indicus (Smut grass) protein is Maturase K.